The following is a 219-amino-acid chain: 3-dehydroquinate dehydratase (219 aa).

Residues 34–36 and arginine 63 contribute to the 3-dehydroquinate site; that span reads ELR. Residue histidine 114 is the Proton donor/acceptor of the active site. Residue lysine 139 is the Schiff-base intermediate with substrate of the active site. Residues arginine 174, threonine 193, and glutamine 197 each contribute to the 3-dehydroquinate site.

Belongs to the type-I 3-dehydroquinase family. In terms of assembly, homodimer.

It carries out the reaction 3-dehydroquinate = 3-dehydroshikimate + H2O. It participates in metabolic intermediate biosynthesis; chorismate biosynthesis; chorismate from D-erythrose 4-phosphate and phosphoenolpyruvate: step 3/7. Its function is as follows. Involved in the third step of the chorismate pathway, which leads to the biosynthesis of aromatic amino acids. Catalyzes the cis-dehydration of 3-dehydroquinate (DHQ) and introduces the first double bond of the aromatic ring to yield 3-dehydroshikimate. The polypeptide is 3-dehydroquinate dehydratase (Sulfolobus acidocaldarius (strain ATCC 33909 / DSM 639 / JCM 8929 / NBRC 15157 / NCIMB 11770)).